The following is a 123-amino-acid chain: Protein Wnt-7b (123 aa).

Ser-1 carries O-palmitoleoyl serine; by PORCN lipidation. The disordered linker stretch occupies residues 33–61; that stretch reads VEVVRASRLRQPTFLKIKQIRSYQKPMET. The cysteines at positions 89 and 104 are disulfide-linked. A glycan (N-linked (GlcNAc...) asparagine) is linked at Asn-90.

This sequence belongs to the Wnt family. In terms of processing, palmitoleoylation is required for efficient binding to frizzled receptors. Depalmitoleoylation leads to Wnt signaling pathway inhibition.

Its subcellular location is the secreted. The protein resides in the extracellular space. It localises to the extracellular matrix. Ligand for members of the frizzled family of seven transmembrane receptors that functions in the canonical Wnt/beta-catenin signaling pathway. Required for normal fusion of the chorion and the allantois during placenta development. Required for central nervous system (CNS) angiogenesis and blood-brain barrier regulation. The chain is Protein Wnt-7b (WNT-7B) from Sceloporus occidentalis (Western fence lizard).